The primary structure comprises 751 residues: Pyridoxal-dependent decarboxylase domain-containing protein 1 (751 aa).

The disordered stretch occupies residues 659 to 751; the sequence is QMRKEDSPDS…QEAESVETIR (93 aa). Positions 690–702 are enriched in polar residues; it reads DSISETSSVSQLE. The span at 720-729 shows a compositional bias: basic and acidic residues; it reads PQERPAHILE. Residues 742-751 show a composition bias toward acidic residues; sequence QEAESVETIR.

Belongs to the group II decarboxylase family. Requires pyridoxal 5'-phosphate as cofactor.

This chain is Pyridoxal-dependent decarboxylase domain-containing protein 1 (pdxdc1), found in Danio rerio (Zebrafish).